The primary structure comprises 282 residues: Elongation factor Ts (282 aa).

Residues Thr81–Val84 form an involved in Mg(2+) ion dislocation from EF-Tu region. A compositionally biased stretch (low complexity) spans Lys218 to Gly270. A disordered region spans residues Lys218–Lys282. The span at Ser273–Lys282 shows a compositional bias: basic residues.

The protein belongs to the EF-Ts family.

Its subcellular location is the cytoplasm. Associates with the EF-Tu.GDP complex and induces the exchange of GDP to GTP. It remains bound to the aminoacyl-tRNA.EF-Tu.GTP complex up to the GTP hydrolysis stage on the ribosome. The protein is Elongation factor Ts of Synechococcus sp. (strain JA-3-3Ab) (Cyanobacteria bacterium Yellowstone A-Prime).